A 333-amino-acid chain; its full sequence is Phenylalanine--tRNA ligase alpha subunit (333 aa).

Glu254 provides a ligand contact to Mg(2+).

The protein belongs to the class-II aminoacyl-tRNA synthetase family. Phe-tRNA synthetase alpha subunit type 1 subfamily. As to quaternary structure, tetramer of two alpha and two beta subunits. Requires Mg(2+) as cofactor.

Its subcellular location is the cytoplasm. It carries out the reaction tRNA(Phe) + L-phenylalanine + ATP = L-phenylalanyl-tRNA(Phe) + AMP + diphosphate + H(+). This chain is Phenylalanine--tRNA ligase alpha subunit (pheS), found in Xylella fastidiosa (strain 9a5c).